Consider the following 784-residue polypeptide: Melanoma-associated antigen D1 (784 aa).

The disordered stretch occupies residues 41–67 (PTNQATAAASGPNASPQSSQPPSANEV). Residues 47–65 (AAASGPNASPQSSQPPSAN) show a composition bias toward low complexity. Residue Y97 is modified to Phosphotyrosine. 4 stretches are compositionally biased toward polar residues: residues 195–214 (PTAETQTQNINQAKMATSQA), 232–246 (AQTSADGSQAQNLES), 259–269 (NNLNVEESSSG), and 306–320 (LAWQNPSGWQNQPAR). Residues 195–339 (PTAETQTQNI…PARQTPPAWQ (145 aa)) form a disordered region. 19 consecutive repeat copies span residues 302-307 (WQTPLA), 308-313 (WQNPSG), 314-319 (WQNQPA), 338-343 (WQNPVA), 344-349 (WQNPVI), 350-355 (WPNPVI), 356-361 (WQNPVI), 362-367 (WPNPIV), 368-373 (WPGPVV), 374-379 (WPNPLA), 380-385 (WQNPPG), 386-391 (WQTPPG), 392-397 (WQTPPG), 398-403 (WQGPPD), 404-409 (WQGPPD), 410-415 (WPLPPD), 416-421 (WPLPPD), 422-427 (WPLPTD), and 428-433 (WPLPPD). A 22 X 6 AA tandem repeats of W-[PQ]-X-P-X-X region spans residues 302–450 (WQTPLAWQNP…VPPDWQNLRP (149 aa)). The tract at residues 379-418 (AWQNPPGWQTPPGWQTPPGWQGPPDWQGPPDWPLPPDWPL) is disordered. Positions 383–403 (PPGWQTPPGWQTPPGWQGPPD) are enriched in low complexity. Pro residues predominate over residues 404 to 418 (WQGPPDWPLPPDWPL). One copy of the 20; approximate repeat lies at 434 to 438 (WIPTD). 2 consecutive repeat copies span residues 439 to 444 (WPVPPD) and 445 to 450 (WQNLRP). The tract at residues 441–471 (VPPDWQNLRPSPNLRPSPNSRASQNLGASQP) is disordered. Low complexity predominate over residues 447–461 (NLRPSPNLRPSPNSR). The MAGE domain maps to 477-675 (LQERANKLVK…RDWTAQFMEA (199 aa)).

Interacts with DLX5, DLX7 and MSX2 and forms homomultimers. Interacts with UNC5A. Interacts with TRIM28 and PJA1. Interacts with NGFR/p75NTR and RORA.

The protein localises to the cytoplasm. The protein resides in the cell membrane. It is found in the nucleus. Its function is as follows. Involved in the apoptotic response after nerve growth factor (NGF) binding in neuronal cells. Inhibits cell cycle progression, and facilitates NGFR-mediated apoptosis. May act as a regulator of the function of DLX family members. May enhance ubiquitin ligase activity of RING-type zinc finger-containing E3 ubiquitin-protein ligases. Proposed to act through recruitment and/or stabilization of the Ubl-conjugating enzyme (E2) at the E3:substrate complex. Plays a role in the circadian rhythm regulation. May act as RORA co-regulator, modulating the expression of core clock genes such as BMAL1 and NFIL3, induced, or NR1D1, repressed. The sequence is that of Melanoma-associated antigen D1 (MAGED1) from Sus scrofa (Pig).